The primary structure comprises 110 residues: UPF0122 protein LMOf2365_1829 (110 aa).

Belongs to the UPF0122 family.

In terms of biological role, might take part in the signal recognition particle (SRP) pathway. This is inferred from the conservation of its genetic proximity to ftsY/ffh. May be a regulatory protein. This chain is UPF0122 protein LMOf2365_1829, found in Listeria monocytogenes serotype 4b (strain F2365).